Consider the following 638-residue polypeptide: uncharacterized protein (638 aa).

This is an uncharacterized protein from Bos taurus (Bovine).